A 254-amino-acid chain; its full sequence is MSLRILDMISVIMAVHRYDKYVDISIDSILNQTYSDFELIIIANGGDCFEIAKQLKHYTELDNRVKIYTLEIGQLSFALNYAVTKCKYSIIARMDSDDVSLPLRLEKQYMYMLQNDLEMVGTGIRLINENGEFIKELKYPNHNKINKILPFKNCFAHPTLMFKKDVILKQRGYCGGFNSEDYDLWLRILNECPNIRWDNLSECLLNYRIHNKSTQKSALAYYECASYSLREFLKKRTITNFLSCLYHFCKALIK.

This sequence belongs to the glycosyltransferase 2 family.

The enzyme catalyses an N-acetyl-alpha-D-galactosaminyl derivative + UDP-alpha-D-galactose = a beta-D-galactosyl-(1-&gt;3)-N-acetyl-alpha-D-galactosaminyl derivative + UDP + H(+). The catalysed reaction is alpha-D-GalNAc-(1-&gt;3)-alpha-D-GalNAc-di-trans,octa-cis-undecaprenyl diphosphate + UDP-alpha-D-galactose = beta-D-Gal-(1-&gt;3)-alpha-D-GalNAc-(1-&gt;3)-alpha-D-GalNAc-di-trans,octa-cis-undecaprenyl diphosphate + UDP + H(+). It participates in bacterial outer membrane biogenesis; LPS O-antigen biosynthesis. Functionally, involved in the assembly of the O-repeating unit during O-antigen biosynthesis. The sequence is that of O-antigen biosynthesis glycosyltransferase WbnJ from Escherichia coli.